We begin with the raw amino-acid sequence, 1249 residues long: Protein STU1 (1249 aa).

2 stretches are compositionally biased toward low complexity: residues 138 to 156 (LNSS…TATK) and 555 to 574 (AASP…PSSA). Disordered stretches follow at residues 138–161 (LNSS…KPHE), 545–619 (KQLE…NPVF), 644–718 (HVET…LGLG), 755–846 (AEHE…NGNI), 860–891 (AFQT…RPEA), and 1084–1118 (HPAP…EKRT). Positions 581 to 600 (KKMDLKAMLAERRRAVKEAG) are enriched in basic and acidic residues. Composition is skewed to low complexity over residues 647–667 (TSSP…RIRP) and 708–718 (SPSLSPSLGLG). The span at 755-774 (AEHEVDELTLKEGQKTRDDG) shows a compositional bias: basic and acidic residues. Composition is skewed to polar residues over residues 809-822 (QQGN…SGRV), 831-844 (ATGT…SRNG), and 863-878 (TPLN…SSAI). Positions 1089-1111 (SSSADNSDPMTSALSQLSLSSSK) are enriched in low complexity.

This sequence belongs to the CLASP family. In terms of assembly, interacts with microtubules.

The protein localises to the cytoplasm. It localises to the cytoskeleton. Its subcellular location is the nucleus. It is found in the spindle. Functionally, microtubule binding protein that promotes the stabilization of dynamic microtubules. Required for mitotic spindle formation. In Cryptococcus neoformans var. neoformans serotype D (strain JEC21 / ATCC MYA-565) (Filobasidiella neoformans), this protein is Protein STU1 (STU1).